The primary structure comprises 101 residues: uncharacterized protein (101 aa).

Residues 65–79 (QEAAAPAGPQEPAEA) are compositionally biased toward low complexity. Residues 65–101 (QEAAAPAGPQEPAEASGDAGKKEEVEEEEIEIDFGMF) form a disordered region. The span at 89–101 (VEEEEIEIDFGMF) shows a compositional bias: acidic residues.

This is an uncharacterized protein from Encephalitozoon cuniculi (strain GB-M1) (Microsporidian parasite).